We begin with the raw amino-acid sequence, 376 residues long: Cytoplasmic tRNA 2-thiolation protein 1 (376 aa).

The protein belongs to the TtcA family. CTU1/NCS6/ATPBD3 subfamily.

It localises to the cytoplasm. Its pathway is tRNA modification; 5-methoxycarbonylmethyl-2-thiouridine-tRNA biosynthesis. In terms of biological role, plays a central role in 2-thiolation of mcm(5)S(2)U at tRNA wobble positions of tRNA(Lys), tRNA(Glu) and tRNA(Gln). Directly binds tRNAs and probably acts by catalyzing adenylation of tRNAs, an intermediate required for 2-thiolation. It is unclear whether it acts as a sulfurtransferase that transfers sulfur from thiocarboxylated URM1 onto the uridine of tRNAs at wobble position. Prior mcm(5) tRNA modification by the elongator complex is required for 2-thiolation. May also be involved in protein urmylation. This is Cytoplasmic tRNA 2-thiolation protein 1 from Scheffersomyces stipitis (strain ATCC 58785 / CBS 6054 / NBRC 10063 / NRRL Y-11545) (Yeast).